The primary structure comprises 374 residues: F-box/LRR-repeat protein 8 (374 aa).

Positions 2–48 (GELVDNLPEEVLALIFRDLPLRDLAVATRVCRAWAAAAANSTVWSDK) constitute an F-box domain.

Directly interacts with SKP1 and CUL1. Widely expressed during embryogenesis and in adult tissues.

Functionally, substrate-recognition component of the SCF (SKP1-CUL1-F-box protein)-type E3 ubiquitin ligase complex. The chain is F-box/LRR-repeat protein 8 (Fbxl8) from Mus musculus (Mouse).